A 557-amino-acid polypeptide reads, in one-letter code: DNA replication factor Cdt1 (557 aa).

The PIP-box K+4 motif motif lies at Met-1–Ile-25. Residues Pro-20–Lys-113 form a disordered region. Thr-28 is modified (phosphothreonine; by MAPK8). Residue Ser-30 is modified to Phosphoserine. Positions Arg-65 to Leu-67 match the Cyclin-binding motif motif. Over residues Leu-69–Glu-81 the composition is skewed to low complexity. Over residues Pro-82–Pro-106 the composition is skewed to pro residues. Residue Ser-107 is modified to Phosphoserine; by MAPK8. The interaction with GMNN stretch occupies residues Pro-163–Tyr-203. Position 392 is a phosphoserine (Ser-392). A disordered region spans residues Arg-397 to Leu-427. Residues Ser-407–Ala-422 show a composition bias toward pro residues. Residues Leu-463–Leu-557 form an interaction with LRWD1 region.

It belongs to the Cdt1 family. Interacts with GMNN; the interaction inhibits the binding of the MCM complex to origins of replication. Interacts with MCM6. Interacts with CDC6; are mutually dependent on one another for loading MCM complexes onto chromatin. Interacts with PCNA. Interacts with LRWD1 during G1 phase and during mitosis. Interacts with NDC80 subunit of the NDC80 complex; leading to kinetochore localization. Interacts with KAT7. Interacts with ubiquitin-binding protein FAF1; the interaction is likely to promote CDT1 degradation. Two independent E3 ubiquitin ligase complexes, SCF(SKP2) and the DCX(DTL) complex, mediated CDT1 degradation in S phase. Ubiquitinated by the DCX(DTL) complex, in response to DNA damage, leading to its degradation. Ubiquitination by the DCX(DTL) complex is necessary to ensure proper cell cycle regulation and is PCNA-dependent: interacts with PCNA via its PIP-box, while the presence of the containing the 'K+4' motif in the PIP box, recruit the DCX(DTL) complex, leading to its degradation. Phosphorylation at Thr-28 by CDK2 targets CDT1 for ubiquitynation by SCF(SKP2) E3 ubiquitin ligase and subsequent degradation. The interaction with GMNN protects it against ubiquitination. Deubiquitinated by USP37. Ubiquitinated and degraded by the SCF(FBXO31) complex during the G2 phase to prevent re-replication. In terms of processing, phosphorylation by cyclin A-dependent kinases at Thr-28 targets CDT1 for ubiquitynation by SCF(SKP2) E3 ubiquitin ligase and subsequent degradation. Phosphorylated at Thr-28 by MAPK8/JNK1, which blocks replication licensing in response to stress. Binding to GMNN is not affected by phosphorylation.

The protein localises to the nucleus. It localises to the chromosome. Its subcellular location is the centromere. The protein resides in the kinetochore. Its function is as follows. Required for both DNA replication and mitosis. DNA replication licensing factor, required for pre-replication complex assembly. Cooperates with CDC6 and the origin recognition complex (ORC) during G1 phase of the cell cycle to promote the loading of the mini-chromosome maintenance (MCM) complex onto DNA to generate pre-replication complexes (pre-RC). Required also for mitosis by promoting stable kinetochore-microtubule attachments. Potential oncogene. The polypeptide is DNA replication factor Cdt1 (Mus musculus (Mouse)).